Consider the following 145-residue polypeptide: Protein SprT-like (145 aa).

A SprT-like domain is found at 4–140 (TNYVQEVSLA…VCGNCHGKLM (137 aa)). His-64 serves as a coordination point for Zn(2+). Glu-65 is a catalytic residue. Zn(2+) is bound at residue His-68.

This sequence belongs to the SprT family. Requires Zn(2+) as cofactor.

Its subcellular location is the cytoplasm. In Streptococcus pyogenes serotype M3 (strain SSI-1), this protein is Protein SprT-like.